Reading from the N-terminus, the 401-residue chain is Phosphoglycerate kinase (401 aa).

Substrate is bound by residues 26-28, R41, 64-67, R125, and R158; these read DFN and HLGK. ATP contacts are provided by residues K209, G300, E331, and 357–360; that span reads GGDS.

Belongs to the phosphoglycerate kinase family. As to quaternary structure, monomer.

It localises to the cytoplasm. It catalyses the reaction (2R)-3-phosphoglycerate + ATP = (2R)-3-phospho-glyceroyl phosphate + ADP. It participates in carbohydrate degradation; glycolysis; pyruvate from D-glyceraldehyde 3-phosphate: step 2/5. The polypeptide is Phosphoglycerate kinase (Clostridium tetani (strain Massachusetts / E88)).